A 102-amino-acid chain; its full sequence is NADH-quinone oxidoreductase subunit K (102 aa).

The next 3 membrane-spanning stretches (helical) occupy residues 6 to 26 (MEHG…GLLI), 30 to 50 (LLFI…AFVV), and 65 to 85 (ILVI…LLLL).

It belongs to the complex I subunit 4L family. In terms of assembly, NDH-1 is composed of 14 different subunits. Subunits NuoA, H, J, K, L, M, N constitute the membrane sector of the complex.

The protein resides in the cell inner membrane. It catalyses the reaction a quinone + NADH + 5 H(+)(in) = a quinol + NAD(+) + 4 H(+)(out). Its function is as follows. NDH-1 shuttles electrons from NADH, via FMN and iron-sulfur (Fe-S) centers, to quinones in the respiratory chain. The immediate electron acceptor for the enzyme in this species is believed to be ubiquinone. Couples the redox reaction to proton translocation (for every two electrons transferred, four hydrogen ions are translocated across the cytoplasmic membrane), and thus conserves the redox energy in a proton gradient. This Aeromonas salmonicida (strain A449) protein is NADH-quinone oxidoreductase subunit K.